A 457-amino-acid chain; its full sequence is Gamma-aminobutyric acid receptor subunit gamma-4 (457 aa).

An N-terminal signal peptide occupies residues 1–21 (MPAMVLLLCLALGPALRSARC). Residues 22-256 (ESTEEYDYDY…VSFDLSRRMG (235 aa)) lie on the Extracellular side of the membrane. N-linked (GlcNAc...) asparagine glycosylation is found at Asn35 and Asn112. Residues Cys173 and Cys187 are joined by a disulfide bond. Asn230 is a glycosylation site (N-linked (GlcNAc...) asparagine). Helical transmembrane passes span 257–279 (YFAI…SFWI), 283–305 (STPA…STIS), and 317–339 (AMDL…YATL). At 340–433 (NYLVGNKKPL…VRIHISRLDS (94 aa)) the chain is on the cytoplasmic side. Residues 434–457 (YSRVFFPTAFLLFNIVYWIAYLYL) form a helical membrane-spanning segment.

It belongs to the ligand-gated ion channel (TC 1.A.9) family. Gamma-aminobutyric acid receptor (TC 1.A.9.5) subfamily. GABRG4 sub-subfamily. In terms of assembly, generally pentameric. There are five types of GABA(A) receptor chains: alpha, beta, gamma, delta, and rho. As to expression, abundant in several brain regions, including the ectostriatum, nucleus rotundus and hyperstriatum ventrale.

It localises to the postsynaptic cell membrane. The protein resides in the cell membrane. GABA, the major inhibitory neurotransmitter in the vertebrate brain, mediates neuronal inhibition by binding to the GABA/benzodiazepine receptor and opening an integral chloride channel. This is Gamma-aminobutyric acid receptor subunit gamma-4 (GABRG4) from Gallus gallus (Chicken).